The chain runs to 309 residues: Olfactory receptor 8U9 (309 aa).

Residues 1-28 (MTQINCTQVTEFILVGLTDRQELKMPLF) are Extracellular-facing. Asn-5 is a glycosylation site (N-linked (GlcNAc...) asparagine). Residues 29 to 49 (VLFLSIYLFTVVGNLGLILLI) form a helical membrane-spanning segment. Residues 50-56 (RTDEKLN) are Cytoplasmic-facing. A helical membrane pass occupies residues 57–77 (TPMYFFLSNLAFVDFCYSSVI). The Extracellular portion of the chain corresponds to 78–97 (TPKMLGNFLYKQNSISFNAC). A disulfide bridge links Cys-97 with Cys-179. The chain crosses the membrane as a helical span at residues 98-118 (AAQLGCFLAFMTAECLLLASM). The Cytoplasmic portion of the chain corresponds to 119–143 (AYDRYVAICNPLMYMVVMSPGICIQ). Residues 144–164 (LVAAPHSYSILVALFHTILTF) form a helical membrane-spanning segment. The Extracellular segment spans residues 165–204 (RLSYCHSNIVNHFYCDDMPLLRLTCSDTRFKQLWIFACAG). The helical transmembrane segment at 205-225 (IMFISSLLIVFVSYMFIISAI) threads the bilayer. The Cytoplasmic segment spans residues 226–239 (LRMHSAEGRQKAFS). The chain crosses the membrane as a helical span at residues 240–260 (TCGSHMLAVTIFYGTLIFMYL). At 261–272 (QPSSSHALDTDK) the chain is on the extracellular side. A helical membrane pass occupies residues 273–293 (MASVFYTVIIPMLNPLIYSLQ). Residues 294-309 (NKEVKEALKKIIINKN) lie on the Cytoplasmic side of the membrane.

It belongs to the G-protein coupled receptor 1 family.

It localises to the cell membrane. Functionally, odorant receptor. This chain is Olfactory receptor 8U9 (OR8U9), found in Homo sapiens (Human).